Here is a 136-residue protein sequence, read N- to C-terminus: Probable glycine cleavage system H protein 3 (136 aa).

The region spanning 28 to 109 is the Lipoyl-binding domain; the sequence is MVTVGITSLG…PYDAWIVKIK (82 aa). Lysine 69 carries the N6-lipoyllysine modification.

It belongs to the GcvH family. As to quaternary structure, the glycine cleavage system is composed of four proteins: P, T, L and H. Requires (R)-lipoate as cofactor.

In terms of biological role, the glycine cleavage system catalyzes the degradation of glycine. The H protein shuttles the methylamine group of glycine from the P protein to the T protein. In Sulfurisphaera tokodaii (strain DSM 16993 / JCM 10545 / NBRC 100140 / 7) (Sulfolobus tokodaii), this protein is Probable glycine cleavage system H protein 3.